The following is a 231-amino-acid chain: Eukaryotic translation initiation factor 4E-1 (231 aa).

EIF4G-binding stretches follow at residues 56–59 and 66–102; these read HPLE and FDNPTTKSRQTAWGSSLRNVYTFSTVEDFWGAYNNIH. Residues 74–79, K106, and 124–125 each bind mRNA; these read RQTAWG and WE. Residues C129 and C167 are joined by a disulfide bond. The tract at residues 150 to 159 is EIF4G-binding; sequence YTLLAMIGHQ. MRNA contacts are provided by residues 174-179 and 219-223; these read RAKGEK and KRLDR.

Belongs to the eukaryotic initiation factor 4E family. EIF4F is a multi-subunit complex, the composition of which varies with external and internal environmental conditions. It is composed of at least EIF4A, EIF4E and EIF4G. EIF4E is also known to interact with other partners. In higher plants two isoforms of EIF4F have been identified, named isoform EIF4F and isoform EIF(iso)4F. Isoform EIF4F has subunits p220 and p26, whereas isoform EIF(iso)4F has subunits p82 and p28. As to quaternary structure, (Microbial infection) Interacts with potyvirus viral genome-linked protein (VPg); mostly with tobacco etch virus (TEV-HAT) VPg and, to a lower extent, with potato virus Y (PVY-LYE84 and PVY-LYE90) and pepper mottle virus (PepMoV) VPg. In terms of processing, according to the redox status, the Cys-129-Cys-167 disulfide bridge may have a role in regulating protein function by affecting its ability to bind capped mRNA.

The protein resides in the nucleus. It is found in the cytoplasm. Its function is as follows. Component of the protein complex eIF4F, which is involved in the recognition of the mRNA cap, ATP-dependent unwinding of 5'-terminal secondary structure and recruitment of mRNA to the ribosome. Recognizes and binds the 7-methylguanosine-containing mRNA cap during an early step in the initiation of protein synthesis and facilitates ribosome binding by inducing the unwinding of the mRNAs secondary structures. Key component of recessive resistance to potyviruses. In terms of biological role, (Microbial infection) Susceptibility host factor required for viral infection (e.g. potato virus Y (PVY), pepper mottle virus (PepMoV) and tobacco etch virus (TEV)) by recruiting viral RNAs to the host ribosomal complex via an interaction with viral genome-linked protein (VPg). In Solanum lycopersicum (Tomato), this protein is Eukaryotic translation initiation factor 4E-1.